A 445-amino-acid polypeptide reads, in one-letter code: 3-phosphoshikimate 1-carboxyvinyltransferase (445 aa).

Polar residues predominate over residues 1–20; that stretch reads MSSTHPGRTIRSGATQNLSG. A disordered region spans residues 1–24; sequence MSSTHPGRTIRSGATQNLSGTIRP. Residues Lys-28, Ser-29, and Arg-33 each coordinate 3-phosphoshikimate. Lys-28 provides a ligand contact to phosphoenolpyruvate. The phosphoenolpyruvate site is built by Gly-101 and Arg-129. 4 residues coordinate 3-phosphoshikimate: Ser-174, Gln-176, Asp-322, and Lys-349. Gln-176 is a phosphoenolpyruvate binding site. The Proton acceptor role is filled by Asp-322. 2 residues coordinate phosphoenolpyruvate: Arg-353 and Arg-397.

The protein belongs to the EPSP synthase family. Monomer.

It is found in the cytoplasm. It catalyses the reaction 3-phosphoshikimate + phosphoenolpyruvate = 5-O-(1-carboxyvinyl)-3-phosphoshikimate + phosphate. It functions in the pathway metabolic intermediate biosynthesis; chorismate biosynthesis; chorismate from D-erythrose 4-phosphate and phosphoenolpyruvate: step 6/7. Its function is as follows. Catalyzes the transfer of the enolpyruvyl moiety of phosphoenolpyruvate (PEP) to the 5-hydroxyl of shikimate-3-phosphate (S3P) to produce enolpyruvyl shikimate-3-phosphate and inorganic phosphate. The polypeptide is 3-phosphoshikimate 1-carboxyvinyltransferase (Magnetococcus marinus (strain ATCC BAA-1437 / JCM 17883 / MC-1)).